The sequence spans 385 residues: ELAV-like protein 4 (385 aa).

The tract at residues 12–48 is disordered; sequence TMEPQVSNGPTSNTSNGPSSNNRNCPSPMQTGATTDD. A compositionally biased stretch (low complexity) spans 18-33; sequence SNGPTSNTSNGPSSNN. Polar residues predominate over residues 34–48; the sequence is RNCPSPMQTGATTDD. A Phosphoserine modification is found at Ser38. RRM domains lie at 51 to 129 and 137 to 217; these read TNLI…YARP and ANLY…FANN. Ser233 is subject to Phosphoserine. An Asymmetric dimethylarginine; by CARM1; alternate modification is found at Arg248. Arg248 is modified (omega-N-methylarginine; by CARM1; alternate). The region spanning 302 to 380 is the RRM 3 domain; that stretch reads WCIFVYNLSP…RVLQVSFKTN (79 aa).

This sequence belongs to the RRM elav family. Component of a TAU mRNP complex, at least composed of IGF2BP1, ELAVL4 and G3BP. Associates with the EIF4F cap-binding complex, composed of EIF4G, EIF4A, EIF4E and PABP. Within the EIF4F cap-binding complex, interacts with EIF4A. Interacts with SMN (via Tudor domain) in an RNA-independent manner; the interaction is required for localization of ELAVL4 to RNA granules. Interacts with MAP1 light chain LC1 (via C-terminus); the interaction contributes to the association of ELAVL4 with microtubules. Interacts with MAP1 light chain LC2. Post-translationally, methylated by CARM1, which leads to reduced RNA-binding activity and enhanced interaction with SMN. Methylation at Arg-248 by CARM1 weakens protective binding to the 3'UTR of CDKN1A mRNA and down-regulates CDKN1A protein expression, thereby maintaining cells in a proliferative state. Methylation is inhibited by NGF, which facilitates neurite outgrowth. In terms of tissue distribution, expressed in pancreatic beta cells (at protein level). Expressed in the brain.

It is found in the cytoplasm. The protein localises to the perikaryon. It localises to the cell projection. Its subcellular location is the dendrite. The protein resides in the axon. It is found in the growth cone. RNA-binding protein that is involved in the post-transcriptional regulation of mRNAs. Plays a role in the regulation of mRNA stability, alternative splicing and translation. Binds to AU-rich element (ARE) sequences in the 3' untranslated region (UTR) of target mRNAs, including GAP43, VEGF, FOS, CDKN1A and ACHE mRNA. Many of the target mRNAs are coding for RNA-binding proteins, transcription factors and proteins involved in RNA processing and/or neuronal development and function. By binding to the mRNA 3'UTR, decreases mRNA deadenylation and thereby contributes to the stabilization of mRNA molecules and their protection from decay. Also binds to the polyadenylated (poly(A)) tail in the 3'UTR of mRNA, thereby increasing its affinity for mRNA binding. Mainly plays a role in neuron-specific RNA processing by stabilization of mRNAs such as GAP43, ACHE and mRNAs of other neuronal proteins, thereby contributing to the differentiation of neural progenitor cells, nervous system development, learning and memory mechanisms. Involved in the negative regulation of the proliferative activity of neuronal stem cells and in the positive regulation of neuronal differentiation of neural progenitor cells. Promotes neuronal differentiation of neural stem/progenitor cells in the adult subventricular zone of the hippocampus by binding to and stabilizing SATB1 mRNA. Binds and stabilizes MSI1 mRNA in neural stem cells. Exhibits increased binding to ACHE mRNA during neuronal differentiation, thereby stabilizing ACHE mRNA and enhancing its expression. Protects CDKN1A mRNA from decay by binding to its 3'-UTR. May bind to APP and BACE1 mRNAS and the BACE1AS lncRNA and enhance their stabilization. Plays a role in neurite outgrowth and in the establishment and maturation of dendritic arbors, thereby contributing to neocortical and hippocampal circuitry function. Stabilizes GAP43 mRNA and protects it from decay during postembryonic development in the brain. By promoting the stabilization of GAP43 mRNA, plays a role in NGF-mediated neurite outgrowth. Binds to BDNF long 3'UTR mRNA, thereby leading to its stabilization and increased dendritic translation after activation of PKC. By increasing translation of BDNF after nerve injury, may contribute to nerve regeneration. Acts as a stabilizing factor by binding to the 3'UTR of NOVA1 mRNA, thereby increasing its translation and enhancing its functional activity in neuron-specific splicing. Stimulates translation of mRNA in a poly(A)- and cap-dependent manner, possibly by associating with the EIF4F cap-binding complex. May also negatively regulate translation by binding to the 5'UTR of Ins2 mRNA, thereby repressing its translation. Upon glucose stimulation, Ins2 mRNA is released from ELAVL4 and translational inhibition is abolished. Also plays a role in the regulation of alternative splicing. May regulate alternative splicing of CALCA pre-mRNA into Calcitonin and Calcitonin gene-related peptide 1 (CGRP) by competing with splicing regulator TIAR for binding to U-rich intronic sequences of CALCA pre-mRNA. The protein is ELAV-like protein 4 (ELAVL4) of Homo sapiens (Human).